Consider the following 237-residue polypeptide: B3 domain-containing protein Os03g0184500 (237 aa).

A DNA-binding region (TF-B3) is located at residues 137-228 (FVKPMLHSHV…TFKVHIIRAT (92 aa)).

It is found in the nucleus. The protein is B3 domain-containing protein Os03g0184500 of Oryza sativa subsp. japonica (Rice).